We begin with the raw amino-acid sequence, 177 residues long: Glia associated membrane protein glam-1 (177 aa).

Transmembrane regions (helical) follow at residues 19–39 (PLVV…FWMS), 42–62 (FGMA…LFGA), and 76–96 (VTFA…VVFA).

Its subcellular location is the membrane. In Caenorhabditis elegans, this protein is Glia associated membrane protein glam-1.